A 64-amino-acid polypeptide reads, in one-letter code: Large ribosomal subunit protein bL35 (64 aa).

The segment covering 1 to 14 (MKQKTHKGTAKRVK) has biased composition (basic residues). The segment at 1–50 (MKQKTHKGTAKRVKITGSGKLRREQANRRHLLEGKPSKRTRRLKGTEDVA) is disordered. The span at 21–36 (LRREQANRRHLLEGKP) shows a compositional bias: basic and acidic residues.

This sequence belongs to the bacterial ribosomal protein bL35 family.

This is Large ribosomal subunit protein bL35 from Corynebacterium diphtheriae (strain ATCC 700971 / NCTC 13129 / Biotype gravis).